Consider the following 440-residue polypeptide: MNSHSPSLRCHAISLGCPKNRVDTERLLGSLGIPLTFIDYPNNADFVFINTCSFIHTAVQESVNTILQLVADVEELSEKPFIIVAGCFVGRYGEKILKKDIPEVDLWLDNKEIESWNEQILLALNIKSTFLVTDRIITTGKSYAWLKISDGCQHSCSFCTIPSIRGSLHSYSIDELVKESRHILDQGVKELVLVAQDVTAWGRDLPNNYGLKTLLDHLLVLDGLKRLRLMYLYPTGLTKDFLLYLKSVGEPFVPYFDVPIQHAHPDILSCMGRPFAKNPRKVIDNIRSVFPEAVLRTSVITGFPGETEGHHVYLSKFIEEIKFQHLGIFSYVAEAGTPAAVMPNQVGEKVKEQRKAELMEIQLKISEKWLKNFVGKRLSLIVDNVHPEWPELYTGRAWFQAPEVDGMVYISGPNIKPGELIEADIMESHSYDLVALADSY.

The 118-residue stretch at 8–125 (LRCHAISLGC…WNEQILLALN (118 aa)) folds into the MTTase N-terminal domain. 6 residues coordinate [4Fe-4S] cluster: C17, C52, C87, C152, C156, and C159. A Radical SAM core domain is found at 138-368 (TTGKSYAWLK…MEIQLKISEK (231 aa)). One can recognise a TRAM domain in the interval 371–439 (KNFVGKRLSL…SYDLVALADS (69 aa)).

The protein belongs to the methylthiotransferase family. RimO subfamily. [4Fe-4S] cluster is required as a cofactor.

Its subcellular location is the cytoplasm. The catalysed reaction is L-aspartate(89)-[ribosomal protein uS12]-hydrogen + (sulfur carrier)-SH + AH2 + 2 S-adenosyl-L-methionine = 3-methylsulfanyl-L-aspartate(89)-[ribosomal protein uS12]-hydrogen + (sulfur carrier)-H + 5'-deoxyadenosine + L-methionine + A + S-adenosyl-L-homocysteine + 2 H(+). In terms of biological role, catalyzes the methylthiolation of an aspartic acid residue of ribosomal protein uS12. In Lawsonia intracellularis (strain PHE/MN1-00), this protein is Ribosomal protein uS12 methylthiotransferase RimO.